The sequence spans 89 residues: Large ribosomal subunit protein bL31B (89 aa).

The protein belongs to the bacterial ribosomal protein bL31 family. Type B subfamily. As to quaternary structure, part of the 50S ribosomal subunit.

The polypeptide is Large ribosomal subunit protein bL31B (Haemophilus ducreyi (strain 35000HP / ATCC 700724)).